Consider the following 228-residue polypeptide: MKVTFLGHAGFLIEGSKKIVIDPFLTGNPLAKAKAEEVKADLVLVSHGHGDHLGDAVAIAGQSNALVVSVYELADYCARHGAQSHGMHIGGSRAFDGVKIKLTPAWHGAGFGTGEGPMEYLGNPCGFVIKIDGKTIYHSGDTGLFGDMELIGRFNSLDLALLPIGDNFTMGPEDALEAVKMLKPKTVIPMHYNTWPLIEQDPAEFKSAVEAATSAEVKILSPGESMEL.

Belongs to the UPF0173 family.

The chain is UPF0173 metal-dependent hydrolase PTH_1415 from Pelotomaculum thermopropionicum (strain DSM 13744 / JCM 10971 / SI).